Reading from the N-terminus, the 58-residue chain is Keratin-associated protein 19-6 (58 aa).

The protein belongs to the KRTAP type 19 family. As to quaternary structure, interacts with hair keratins.

Functionally, in the hair cortex, hair keratin intermediate filaments are embedded in an interfilamentous matrix, consisting of hair keratin-associated proteins (KRTAP), which are essential for the formation of a rigid and resistant hair shaft through their extensive disulfide bond cross-linking with abundant cysteine residues of hair keratins. The matrix proteins include the high-sulfur and high-glycine-tyrosine keratins. In Homo sapiens (Human), this protein is Keratin-associated protein 19-6 (KRTAP19-6).